The chain runs to 412 residues: O-acetyl-L-homoserine sulfhydrylase 2 (412 aa).

Residue Lys202 is modified to N6-(pyridoxal phosphate)lysine.

This sequence belongs to the trans-sulfuration enzymes family. In terms of assembly, homotetramer. Requires pyridoxal 5'-phosphate as cofactor.

It carries out the reaction O-acetyl-L-homoserine + hydrogen sulfide = L-homocysteine + acetate. Its activity is regulated as follows. Inhibited by the carbonyl reagents hydroxylamine and phenylhydrazine. Also inhibited by methionine and propargylglycine. In terms of biological role, catalyzes the conversion of O-acetyl-L-homoserine (OAH) into homocysteine in the methionine biosynthesis pathway. Has weak activity with O-acetyl-L-serine, O-phospho-L-serine, L-serine, O-succinyl-L-homoserine and L-homoserine. Shows a very low CTT gamma-synthase activity. This chain is O-acetyl-L-homoserine sulfhydrylase 2, found in Thermus thermophilus (strain ATCC 27634 / DSM 579 / HB8).